A 190-amino-acid chain; its full sequence is Threonylcarbamoyl-AMP synthase (190 aa).

The 184-residue stretch at 7 to 190 (GDAIAAAIDV…ALTGELFRQG (184 aa)) folds into the YrdC-like domain.

It belongs to the SUA5 family. TsaC subfamily.

Its subcellular location is the cytoplasm. The catalysed reaction is L-threonine + hydrogencarbonate + ATP = L-threonylcarbamoyladenylate + diphosphate + H2O. Functionally, required for the formation of a threonylcarbamoyl group on adenosine at position 37 (t(6)A37) in tRNAs that read codons beginning with adenine. Catalyzes the conversion of L-threonine, HCO(3)(-)/CO(2) and ATP to give threonylcarbamoyl-AMP (TC-AMP) as the acyladenylate intermediate, with the release of diphosphate. The chain is Threonylcarbamoyl-AMP synthase from Shigella dysenteriae serotype 1 (strain Sd197).